The sequence spans 641 residues: Sodium-dependent nutrient amino acid transporter 1 (641 aa).

Residues 1–36 are disordered; that stretch reads MELKGVQPSNGSANGNGTTNAASTEKTDAEKHTPER. Over 1-38 the chain is Cytoplasmic; that stretch reads MELKGVQPSNGSANGNGTTNAASTEKTDAEKHTPERTN. Positions 9 to 24 are enriched in low complexity; the sequence is SNGSANGNGTTNAAST. Residues 25–35 show a composition bias toward basic and acidic residues; the sequence is EKTDAEKHTPE. 3 consecutive transmembrane segments (helical) span residues 39-59, 72-92, and 109-129; these read WGNGLEFLMSCISVSVGLGNV, GAFLIPYIIVLFLIGKPMYYL, and SVVPGFVGVGYGQAFGTICII. N183 and N188 each carry an N-linked (GlcNAc...) asparagine glycan. 9 helical membrane passes run 229 to 249, 258 to 278, 307 to 327, 341 to 361, 401 to 421, 441 to 461, 474 to 494, 516 to 536, and 552 to 572; these read PDWKLTLALLAAWVVIFLVIM, AAYFLALFPYVVLFVLLIRAV, AVVQCFFSLAVGSGPIIMFAS, IVTTLDTLTSLLGGITIFAIL, LFSVLFFFMLFVLGIGSIVAL, VALITSACGFLMGLVYVTPGG, TYVVFILAIFELAGIVWVYGL, CWSFFTPVMMIIIFIYSMVTI, and IAGWLLFAIGAAQFPLWGLWY.

Belongs to the sodium:neurotransmitter symporter (SNF) (TC 2.A.22) family.

The protein resides in the membrane. Unusual broad substrate spectrum amino acid:sodium cotransporter that promotes absorption of the D isomers of essential amino acids. Neutral amino acids are the preferred substrates, especially methionine and phenylalanine. The sequence is that of Sodium-dependent nutrient amino acid transporter 1 from Drosophila erecta (Fruit fly).